The primary structure comprises 317 residues: MEIRAPPTSLRLAPPPPASASFRRTALRTSFLNGSVSLRLIQVRQSNVNRFKCNGIRSNLLDRFSRVVKSYANAVLSSFEDPEKILDQAVLEMNDDLTKMRQATAQVLASQKRLENKYKAAEQASDDWYRRAQLALQKGDEDLAREALKRRKSYADNASSLKAQLDQQKGVVENLVSNTRVLESKIAEAKQKKDTLKARAQSAKTSTKVSEMLGNVNTSGALSAFEKMEEKVMAMESQAEALGQLATDDLEGKFALLETSSVDDDLAQMKKEISGSSSKGELPPGRTAVSNSGAARPFRDIEIENELNELRKKANEY.

Residues 92–246 adopt a coiled-coil conformation; it reads EMNDDLTKMR…SQAEALGQLA (155 aa). Positions 265-317 are disordered; sequence DLAQMKKEISGSSSKGELPPGRTAVSNSGAARPFRDIEIENELNELRKKANEY. The segment covering 297–317 has biased composition (basic and acidic residues); sequence PFRDIEIENELNELRKKANEY.

This sequence belongs to the PspA/Vipp/IM30 family. As to quaternary structure, homomultimer. Complex formation involves interaction via the central alpha-helical domain (71-286). (Microbial infection) Interacts with the rice tungro bacilliform virus (RTBV) capsid protein.

Its subcellular location is the plastid. It localises to the chloroplast inner membrane. The protein resides in the chloroplast thylakoid membrane. In terms of biological role, required for plastid vesicle formation and thylakoid membrane biogenesis, but not for functional assembly of thylakoid protein complexes. This Oryza sativa subsp. japonica (Rice) protein is Membrane-associated protein VIPP1, chloroplastic.